The chain runs to 296 residues: Lipoyl synthase (296 aa).

[4Fe-4S] cluster is bound by residues C35, C40, C46, C61, C65, C68, and S274. In terms of domain architecture, Radical SAM core spans 47–263 (WSSKHVTVMI…KEAAYARGFL (217 aa)).

It belongs to the radical SAM superfamily. Lipoyl synthase family. It depends on [4Fe-4S] cluster as a cofactor.

It localises to the cytoplasm. It carries out the reaction [[Fe-S] cluster scaffold protein carrying a second [4Fe-4S](2+) cluster] + N(6)-octanoyl-L-lysyl-[protein] + 2 oxidized [2Fe-2S]-[ferredoxin] + 2 S-adenosyl-L-methionine + 4 H(+) = [[Fe-S] cluster scaffold protein] + N(6)-[(R)-dihydrolipoyl]-L-lysyl-[protein] + 4 Fe(3+) + 2 hydrogen sulfide + 2 5'-deoxyadenosine + 2 L-methionine + 2 reduced [2Fe-2S]-[ferredoxin]. It participates in protein modification; protein lipoylation via endogenous pathway; protein N(6)-(lipoyl)lysine from octanoyl-[acyl-carrier-protein]: step 2/2. Functionally, catalyzes the radical-mediated insertion of two sulfur atoms into the C-6 and C-8 positions of the octanoyl moiety bound to the lipoyl domains of lipoate-dependent enzymes, thereby converting the octanoylated domains into lipoylated derivatives. The polypeptide is Lipoyl synthase (Neorickettsia sennetsu (strain ATCC VR-367 / Miyayama) (Ehrlichia sennetsu)).